Here is a 111-residue protein sequence, read N- to C-terminus: Gene 81 protein (111 aa).

This Mycobacterium (Mycobacteriophage L5) protein is Gene 81 protein (81).